Here is a 192-residue protein sequence, read N- to C-terminus: Erythropoietin (192 aa).

The first 26 residues, Met1–Cys26, serve as a signal peptide directing secretion. A disulfide bridge connects residues Cys33 and Cys187. Residues Asn50, Asn64, and Asn109 are each glycosylated (N-linked (GlcNAc...) asparagine).

The protein belongs to the EPO/TPO family. In terms of tissue distribution, produced by kidney or liver of adult mammals and by liver of fetal or neonatal mammals.

The protein resides in the secreted. In terms of biological role, hormone involved in the regulation of erythrocyte proliferation and differentiation and the maintenance of a physiological level of circulating erythrocyte mass. Binds to EPOR leading to EPOR dimerization and JAK2 activation thereby activating specific downstream effectors, including STAT1 and STAT3. This is Erythropoietin (Epo) from Rattus norvegicus (Rat).